A 567-amino-acid chain; its full sequence is Dihydroxy-acid dehydratase 1 (567 aa).

Residue cysteine 57 participates in [2Fe-2S] cluster binding. Residue aspartate 89 participates in Mg(2+) binding. Cysteine 130 is a binding site for [2Fe-2S] cluster. Mg(2+) contacts are provided by aspartate 131 and lysine 132. Residue lysine 132 is modified to N6-carboxylysine. Cysteine 202 is a binding site for [2Fe-2S] cluster. Position 454 (glutamate 454) interacts with Mg(2+). Serine 480 functions as the Proton acceptor in the catalytic mechanism.

The protein belongs to the IlvD/Edd family. In terms of assembly, homodimer. [2Fe-2S] cluster is required as a cofactor. Requires Mg(2+) as cofactor.

The catalysed reaction is (2R)-2,3-dihydroxy-3-methylbutanoate = 3-methyl-2-oxobutanoate + H2O. It catalyses the reaction (2R,3R)-2,3-dihydroxy-3-methylpentanoate = (S)-3-methyl-2-oxopentanoate + H2O. The protein operates within amino-acid biosynthesis; L-isoleucine biosynthesis; L-isoleucine from 2-oxobutanoate: step 3/4. It participates in amino-acid biosynthesis; L-valine biosynthesis; L-valine from pyruvate: step 3/4. Functionally, functions in the biosynthesis of branched-chain amino acids. Catalyzes the dehydration of (2R,3R)-2,3-dihydroxy-3-methylpentanoate (2,3-dihydroxy-3-methylvalerate) into 2-oxo-3-methylpentanoate (2-oxo-3-methylvalerate) and of (2R)-2,3-dihydroxy-3-methylbutanoate (2,3-dihydroxyisovalerate) into 2-oxo-3-methylbutanoate (2-oxoisovalerate), the penultimate precursor to L-isoleucine and L-valine, respectively. The sequence is that of Dihydroxy-acid dehydratase 1 from Aromatoleum aromaticum (strain DSM 19018 / LMG 30748 / EbN1) (Azoarcus sp. (strain EbN1)).